Here is a 626-residue protein sequence, read N- to C-terminus: MSKFENISKRSHELDPCTNSNYAEFKVVHTDLSLSVSFESKNISGNVIYTLKKLTKTNRLVLDTSFLEVSTAKVNGKEVVFELLPHKAPFGSPLVIPIDGENESLTVEVDFRTTDKCTAIQFIQGDTGPYVFSQCQAIHARSLFPCFDTPGVKSPYKFTAKSPSVCTMSGRPQPSNEAGVYHFDQPIPIPSYLVSITSGNLHKAPIGPRSDVYSEEPSLKDCQWEFEKDMENFIQIAEKIVFEYEWSRFDSLVLPSSFPYGGMEIPNMTQLTPTLISKDRTQVKVMAHELAHSWSGNLVTNCSWEHFWLNEGWTVYLERRIIGAIAAAEAQEEGRANPEKYGEQVRHFNAIIGWNALVETVESFDPKFTSLVWDLASGDPDDAFSRIPYEKGFNFLFHIETKVGGTKEFDPFIKHYFKKFRYQSLNSAQFIETLYDFYTPLGKKDALDTIDLEKWLFQPGLPDDPKFDTTLADQVYVLVEKWVDFVKSGETEVKFSEADVKEFEGEQEMLFIETLTDRFKDLDVSPELIRKLPSIYPKYAASKNGEVLARWNELLIKYGNYTSSDEQVKFFADWLGTVGRMKYVRPGYKLLQTSVSIEFAVETFKRFEDKYHPICKTMVQKDLNLA.

Substrate is bound by residues Q134 to Q136 and P259 to E264. H288 is a binding site for Zn(2+). E289 functions as the Proton acceptor in the catalytic mechanism. Residues H292 and E311 each coordinate Zn(2+). Y389 serves as the catalytic Proton donor.

Belongs to the peptidase M1 family. Zn(2+) serves as cofactor.

It is found in the cytoplasm. Its subcellular location is the nucleus. It carries out the reaction an epoxide + H2O = an ethanediol. Functionally, aminopeptidase that preferentially cleaves di- and tripeptides. Also has low epoxide hydrolase activity (in vitro). Can hydrolyze the epoxide leukotriene LTA(4) but it forms preferentially 5,6-dihydroxy-7,9,11,14-eicosatetraenoic acid rather than the cytokine leukotriene B(4) as the product compared to the homologous mammalian enzyme (in vitro). The chain is Leucine aminopeptidase 2-1 (LKA4) from Scheffersomyces stipitis (strain ATCC 58785 / CBS 6054 / NBRC 10063 / NRRL Y-11545) (Yeast).